We begin with the raw amino-acid sequence, 341 residues long: S-adenosylmethionine:tRNA ribosyltransferase-isomerase (341 aa).

This sequence belongs to the QueA family. As to quaternary structure, monomer.

The protein resides in the cytoplasm. The catalysed reaction is 7-aminomethyl-7-carbaguanosine(34) in tRNA + S-adenosyl-L-methionine = epoxyqueuosine(34) in tRNA + adenine + L-methionine + 2 H(+). The protein operates within tRNA modification; tRNA-queuosine biosynthesis. Functionally, transfers and isomerizes the ribose moiety from AdoMet to the 7-aminomethyl group of 7-deazaguanine (preQ1-tRNA) to give epoxyqueuosine (oQ-tRNA). In Pelotomaculum thermopropionicum (strain DSM 13744 / JCM 10971 / SI), this protein is S-adenosylmethionine:tRNA ribosyltransferase-isomerase.